The sequence spans 338 residues: POU domain, class 4, transcription factor 3 (338 aa).

Residues 56 to 65 carry the POU-IV box motif; the sequence is RAEALAAVDI. Positions 91–112 are disordered; that stretch reads TSPTVPISHPAALTSHPHHPVH. The POU-specific domain occupies 179–256; sequence DVESDPRELE…VLQAWLEEAE (78 aa). Residues 274 to 333 constitute a DNA-binding region (homeobox); that stretch reads RKRKRTSIAAPEKRSLEAYFAIQPRPSSEKIAAIAEKLDLKKNVVRVWFCNQRQKQKRMK.

This sequence belongs to the POU transcription factor family. As to quaternary structure, interacts with ISL1. As to expression, expressed in the chochlea of the inner ear.

The protein localises to the nucleus. It is found in the cytoplasm. Acts as a transcriptional activator. Acts by binding to sequences related to the consensus octamer motif 5'-ATGCAAAT-3' in the regulatory regions of its target genes. Involved in the auditory system development, required for terminal differentiation of hair cells in the inner ear. In Rattus norvegicus (Rat), this protein is POU domain, class 4, transcription factor 3.